A 100-amino-acid polypeptide reads, in one-letter code: Small ribosomal subunit protein uS14c (100 aa).

It belongs to the universal ribosomal protein uS14 family. In terms of assembly, part of the 30S ribosomal subunit.

The protein localises to the plastid. The protein resides in the chloroplast. In terms of biological role, binds 16S rRNA, required for the assembly of 30S particles. The polypeptide is Small ribosomal subunit protein uS14c (Carica papaya (Papaya)).